Consider the following 938-residue polypeptide: Isoleucine--tRNA ligase (938 aa).

Positions P58 to H68 match the 'HIGH' region motif. E563 is a binding site for L-isoleucyl-5'-AMP. The 'KMSKS' region signature appears at K604–S608. K607 contacts ATP. Positions 903, 906, 921, and 924 each coordinate Zn(2+).

The protein belongs to the class-I aminoacyl-tRNA synthetase family. IleS type 1 subfamily. Monomer. It depends on Zn(2+) as a cofactor.

It localises to the cytoplasm. The catalysed reaction is tRNA(Ile) + L-isoleucine + ATP = L-isoleucyl-tRNA(Ile) + AMP + diphosphate. Its function is as follows. Catalyzes the attachment of isoleucine to tRNA(Ile). As IleRS can inadvertently accommodate and process structurally similar amino acids such as valine, to avoid such errors it has two additional distinct tRNA(Ile)-dependent editing activities. One activity is designated as 'pretransfer' editing and involves the hydrolysis of activated Val-AMP. The other activity is designated 'posttransfer' editing and involves deacylation of mischarged Val-tRNA(Ile). In Buchnera aphidicola subsp. Schizaphis graminum (strain Sg), this protein is Isoleucine--tRNA ligase.